We begin with the raw amino-acid sequence, 662 residues long: UvrABC system protein B (662 aa).

In terms of domain architecture, Helicase ATP-binding spans 25–182 (KGIEKGEKFQ…KKLVEIQYER (158 aa)). An ATP-binding site is contributed by 38–45 (GVTGSGKT). The Beta-hairpin signature appears at 91 to 114 (YYDYYQPEAYVAQSDTYIEKDASI). The 167-residue stretch at 429–595 (QIDDLYTSIQ…TIIKDIREVI (167 aa)) folds into the Helicase C-terminal domain. The UVR domain occupies 622–657 (DKLIEKYEEEMREAAQNLQFEKAAHLRDVIYKLKRD).

This sequence belongs to the UvrB family. In terms of assembly, forms a heterotetramer with UvrA during the search for lesions. Interacts with UvrC in an incision complex.

The protein resides in the cytoplasm. Functionally, the UvrABC repair system catalyzes the recognition and processing of DNA lesions. A damage recognition complex composed of 2 UvrA and 2 UvrB subunits scans DNA for abnormalities. Upon binding of the UvrA(2)B(2) complex to a putative damaged site, the DNA wraps around one UvrB monomer. DNA wrap is dependent on ATP binding by UvrB and probably causes local melting of the DNA helix, facilitating insertion of UvrB beta-hairpin between the DNA strands. Then UvrB probes one DNA strand for the presence of a lesion. If a lesion is found the UvrA subunits dissociate and the UvrB-DNA preincision complex is formed. This complex is subsequently bound by UvrC and the second UvrB is released. If no lesion is found, the DNA wraps around the other UvrB subunit that will check the other stand for damage. The protein is UvrABC system protein B of Clostridium botulinum (strain 657 / Type Ba4).